A 99-amino-acid polypeptide reads, in one-letter code: Malonate decarboxylase acyl carrier protein (99 aa).

O-(phosphoribosyl dephospho-coenzyme A)serine is present on Ser-25.

It belongs to the MdcC family. In terms of processing, covalently binds the prosthetic group of malonate decarboxylase.

Its subcellular location is the cytoplasm. In terms of biological role, subunit of malonate decarboxylase, it is an acyl carrier protein to which acetyl and malonyl thioester residues are bound via a 2'-(5''-phosphoribosyl)-3'-dephospho-CoA prosthetic group and turn over during the catalytic mechanism. This is Malonate decarboxylase acyl carrier protein from Pseudomonas fluorescens (strain ATCC BAA-477 / NRRL B-23932 / Pf-5).